A 550-amino-acid chain; its full sequence is Methionine--tRNA ligase (550 aa).

Residues 12 to 22 carry the 'HIGH' region motif; sequence PYANGPLHFGH. Zn(2+) is bound by residues Cys144, Cys147, Cys157, and Cys160. A 'KMSKS' region motif is present at residues 330–334; the sequence is QFSKS. Residue Lys333 participates in ATP binding.

Belongs to the class-I aminoacyl-tRNA synthetase family. MetG type 1 subfamily. Monomer. Requires Zn(2+) as cofactor.

It localises to the cytoplasm. It catalyses the reaction tRNA(Met) + L-methionine + ATP = L-methionyl-tRNA(Met) + AMP + diphosphate. In terms of biological role, is required not only for elongation of protein synthesis but also for the initiation of all mRNA translation through initiator tRNA(fMet) aminoacylation. In Chlamydia caviae (strain ATCC VR-813 / DSM 19441 / 03DC25 / GPIC) (Chlamydophila caviae), this protein is Methionine--tRNA ligase.